Consider the following 134-residue polypeptide: uncharacterized protein (134 aa).

The next 2 helical transmembrane spans lie at 49–69 (VAVP…SLDV) and 71–91 (LSMT…LNKV).

It is found in the cell membrane. This is an uncharacterized protein from Mycobacterium tuberculosis (strain ATCC 25618 / H37Rv).